The sequence spans 207 residues: Small ribosomal subunit protein uS3c (207 aa).

The KH type-2 domain occupies 39–109; the sequence is IRDYIFTNLL…QLKINIIDVT (71 aa).

It belongs to the universal ribosomal protein uS3 family. In terms of assembly, part of the 30S ribosomal subunit.

The protein localises to the plastid. It is found in the chloroplast. This is Small ribosomal subunit protein uS3c (rps3) from Cyanidium caldarium (Red alga).